Reading from the N-terminus, the 282-residue chain is Secretory carrier-associated membrane protein 3 (282 aa).

The disordered stretch occupies residues 1 to 36 (MAGKHGRNGFEDDDVNPFAGGSVPPANNSRLPPLSH). Residues 1 to 117 (MAGKHGRNGF…EIPIHLQRMQ (117 aa)) lie on the Cytoplasmic side of the membrane. Residues 48 to 92 (LDSSKDLKKKEKELQAMEAELNKRERELKRKEEAAAQAGIVIEDK) adopt a coiled-coil conformation. 4 helical membrane-spanning segments follow: residues 118–138 (YLAF…IIAT), 148–168 (VIIW…AYVL), 185–205 (FGWF…AAVA), and 230–250 (IVGI…LLSI). Over 251 to 282 (GVIQQVYMYFRGSGKAAEMKREAARGALSSAF) the chain is Cytoplasmic.

Belongs to the SCAMP family.

The protein resides in the cell membrane. The protein localises to the cytoplasmic vesicle. Its subcellular location is the secretory vesicle membrane. Probably involved in membrane trafficking. The sequence is that of Secretory carrier-associated membrane protein 3 (SCAMP3) from Oryza sativa subsp. japonica (Rice).